A 339-amino-acid polypeptide reads, in one-letter code: ATPase GET3 (339 aa).

34 to 41 (KGGVGKTT) lines the ATP pocket. The active site involves aspartate 63. Glutamate 244 and asparagine 271 together coordinate ATP. Residues cysteine 282 and cysteine 285 each contribute to the Zn(2+) site.

This sequence belongs to the arsA ATPase family. In terms of assembly, homodimer.

It localises to the cytoplasm. The protein localises to the endoplasmic reticulum. In terms of biological role, ATPase required for the post-translational delivery of tail-anchored (TA) proteins to the endoplasmic reticulum. Recognizes and selectively binds the transmembrane domain of TA proteins in the cytosol. This complex then targets to the endoplasmic reticulum by membrane-bound receptors, where the tail-anchored protein is released for insertion. This process is regulated by ATP binding and hydrolysis. ATP binding drives the homodimer towards the closed dimer state, facilitating recognition of newly synthesized TA membrane proteins. ATP hydrolysis is required for insertion. Subsequently, the homodimer reverts towards the open dimer state, lowering its affinity for the membrane-bound receptor, and returning it to the cytosol to initiate a new round of targeting. The sequence is that of ATPase GET3 from Podospora anserina (strain S / ATCC MYA-4624 / DSM 980 / FGSC 10383) (Pleurage anserina).